Reading from the N-terminus, the 172-residue chain is SsrA-binding protein (172 aa).

It belongs to the SmpB family.

It is found in the cytoplasm. Its function is as follows. Required for rescue of stalled ribosomes mediated by trans-translation. Binds to transfer-messenger RNA (tmRNA), required for stable association of tmRNA with ribosomes. tmRNA and SmpB together mimic tRNA shape, replacing the anticodon stem-loop with SmpB. tmRNA is encoded by the ssrA gene; the 2 termini fold to resemble tRNA(Ala) and it encodes a 'tag peptide', a short internal open reading frame. During trans-translation Ala-aminoacylated tmRNA acts like a tRNA, entering the A-site of stalled ribosomes, displacing the stalled mRNA. The ribosome then switches to translate the ORF on the tmRNA; the nascent peptide is terminated with the 'tag peptide' encoded by the tmRNA and targeted for degradation. The ribosome is freed to recommence translation, which seems to be the essential function of trans-translation. This Dehalococcoides mccartyi (strain ATCC BAA-2266 / KCTC 15142 / 195) (Dehalococcoides ethenogenes (strain 195)) protein is SsrA-binding protein.